Reading from the N-terminus, the 154-residue chain is Spermatogenesis-associated protein 19, mitochondrial (154 aa).

The N-terminal 24 residues, 1 to 24 (MIITTWIVYILARKGAGLPFPPKV), are a transit peptide targeting the mitochondrion. A phosphoserine mark is found at serine 26 and serine 116.

It is found in the mitochondrion outer membrane. The protein resides in the mitochondrion. Its subcellular location is the cell projection. The protein localises to the cilium. It localises to the flagellum. Functionally, essential for sperm motility and male fertility. Plays an important role in sperm motility by regulating the organization and function of the mitochondria and is also required for correct sperm midpiece assembly. The sequence is that of Spermatogenesis-associated protein 19, mitochondrial (SPATA19) from Bos taurus (Bovine).